A 455-amino-acid polypeptide reads, in one-letter code: MSLEIVILAAGQGTRMRSALPKVLHPVAGNSMLGHVIHSARQLDPQRIHVVIGHGADAVRERLDADDLNFVLQDKQLGTGHAVAQAVPFITADTVLILYGDVPLIEVETLQRLLKQVGPEQLGLLTVELDDPTGYGRIVRDADGKVVAIVEQKDADEATRAITEGNTGILAVPGKRLGDWTGRLSNNNAQGEYYLTDVIAMAVSDGLIVATEQPHDAMEVQGANDRKQLAELERHYQLRAGRRLMAQGVTLRDPARFDVRGEVIVGRDVLIDINVILEGRVVIEDDVIIGPNCVIKDSTLRKGAVIKANSHLDGAVMGEGSDAGPFARLRPGTVLEARAHVGNFVELKNAHLGQGAKAGHLTYLGDAVIGARTNIGAGTITCNYDGVNKHKTIMGEDVFIGSNNSLVAPVDISSGATTAAGSTITQDVAPAQLAVGRARQKNIDGWKRPEKIKKD.

Positions 1–226 (MSLEIVILAA…AMEVQGANDR (226 aa)) are pyrophosphorylase. UDP-N-acetyl-alpha-D-glucosamine-binding positions include 8 to 11 (LAAG), lysine 22, glutamine 73, 78 to 79 (GT), 99 to 101 (YGD), glycine 136, glutamate 151, asparagine 166, and asparagine 224. Mg(2+) is bound at residue aspartate 101. Residue asparagine 224 coordinates Mg(2+). A linker region spans residues 227 to 247 (KQLAELERHYQLRAGRRLMAQ). The segment at 248 to 455 (GVTLRDPARF…WKRPEKIKKD (208 aa)) is N-acetyltransferase. UDP-N-acetyl-alpha-D-glucosamine is bound by residues arginine 330 and lysine 348. Histidine 360 (proton acceptor) is an active-site residue. The UDP-N-acetyl-alpha-D-glucosamine site is built by tyrosine 363 and asparagine 374. Acetyl-CoA is bound by residues alanine 377, 383–384 (NY), serine 402, alanine 420, and arginine 437.

In the N-terminal section; belongs to the N-acetylglucosamine-1-phosphate uridyltransferase family. It in the C-terminal section; belongs to the transferase hexapeptide repeat family. In terms of assembly, homotrimer. It depends on Mg(2+) as a cofactor.

Its subcellular location is the cytoplasm. It catalyses the reaction alpha-D-glucosamine 1-phosphate + acetyl-CoA = N-acetyl-alpha-D-glucosamine 1-phosphate + CoA + H(+). The enzyme catalyses N-acetyl-alpha-D-glucosamine 1-phosphate + UTP + H(+) = UDP-N-acetyl-alpha-D-glucosamine + diphosphate. It participates in nucleotide-sugar biosynthesis; UDP-N-acetyl-alpha-D-glucosamine biosynthesis; N-acetyl-alpha-D-glucosamine 1-phosphate from alpha-D-glucosamine 6-phosphate (route II): step 2/2. Its pathway is nucleotide-sugar biosynthesis; UDP-N-acetyl-alpha-D-glucosamine biosynthesis; UDP-N-acetyl-alpha-D-glucosamine from N-acetyl-alpha-D-glucosamine 1-phosphate: step 1/1. The protein operates within bacterial outer membrane biogenesis; LPS lipid A biosynthesis. In terms of biological role, catalyzes the last two sequential reactions in the de novo biosynthetic pathway for UDP-N-acetylglucosamine (UDP-GlcNAc). The C-terminal domain catalyzes the transfer of acetyl group from acetyl coenzyme A to glucosamine-1-phosphate (GlcN-1-P) to produce N-acetylglucosamine-1-phosphate (GlcNAc-1-P), which is converted into UDP-GlcNAc by the transfer of uridine 5-monophosphate (from uridine 5-triphosphate), a reaction catalyzed by the N-terminal domain. The polypeptide is Bifunctional protein GlmU (Pseudomonas fluorescens (strain ATCC BAA-477 / NRRL B-23932 / Pf-5)).